Consider the following 513-residue polypeptide: Histone acetyltransferase KAT5 (513 aa).

A Tudor-knot domain is found at 8–65; it reads IEGCRLPVLRRNQDNEDEWPLAEILSVKDISGRKLFYVHYIDFNKRLDEWVTHERLDL. N6-acetyllysine is present on K52. The interval 69–106 is disordered; the sequence is QFPKKEAKTPTKNGLPGSRPGSPEREVPASAQASGKTL. A Phosphoserine; by GSK3 modification is found at S86. S90 is subject to Phosphoserine; by CDK1 and CDK9. N6-acetyllysine; by autocatalysis is present on residues K104 and K120. The tract at residues 122–220 is disordered; that stretch reads REAIPGGEPD…RMTGSLVSDR (99 aa). Residues 133–144 are compositionally biased toward polar residues; sequence PLSSSSCLQPNH. 4 positions are modified to N6-acetyllysine; by autocatalysis: K148, K150, K187, and K189. At S199 the chain carries Phosphoserine. Positions 227–504 constitute an MYST-type HAT domain; the sequence is TRMKNIECIE…IDSKCLHFTP (278 aa). Residues 260–285 form a C2HC MYST-type zinc finger; sequence LYLCEFCLKYGRSLKCLQRHLTKCDL. K327 carries the N6-acetyllysine; by autocatalysis modification. Residues 368–513 form an interaction with ATF2 region; that stretch reads ACILTLPPYQ…PKDWSKRGKW (146 aa). Residues 370–372 and 377–383 each bind acetyl-CoA; these read ILT and QRRGYGK. E403 serves as the catalytic Proton donor/acceptor. S407 and S416 together coordinate acetyl-CoA. Residue K430 forms a Glycyl lysine isopeptide (Lys-Gly) (interchain with G-Cter in SUMO1); alternate linkage. Residue K430 forms a Glycyl lysine isopeptide (Lys-Gly) (interchain with G-Cter in SUMO2); alternate linkage. K451 is covalently cross-linked (Glycyl lysine isopeptide (Lys-Gly) (interchain with G-Cter in SUMO1)).

This sequence belongs to the MYST (SAS/MOZ) family. Component of the NuA4 histone acetyltransferase complex which contains the catalytic subunit KAT5/TIP60 and the subunits EP400, TRRAP/PAF400, BRD8/SMAP, EPC1, DMAP1/DNMAP1, RUVBL1/TIP49, RUVBL2, ING3, actin, ACTL6A/BAF53A, MORF4L1/MRG15, MORF4L2/MRGX, MRGBP, YEATS4/GAS41, VPS72/YL1 and MEAF6. KAT5/TIP60, EPC1, and ING3 together constitute a minimal HAT complex termed Piccolo NuA4. The NuA4 complex interacts with MYC. Interacts with ATM. Interacts with JADE1. Interacts with PLA2G4A/CPLA2, EDNRA and HDAC7. Interacts with the cytoplasmic tail of APP and APBB1/FE65. Interacts with TRIM24 and TRIM68. Forms a complex with SENP6 and UBE2I in response to UV irradiation. Identified in a complex with HINT1. Interacts with ATF2 and CUL3. Interacts with NR1D2 (via N-terminus). Component of a SWR1-like complex. Interacts with FOXP3. Interacts with ZBTB49. Interacts with SRF. Interacts with ATF3; promoting autoacetylation and deubiquitination by USP7. Interacts with EP300/p300; interaction promotes KAT5 autoacetylation. Interacts with PRKDC; interaction is impaired following KAT5 sumoylation. Interacts with GPR50. Interacts with NME3; this interaction enables recruitment of NME3 at DNA damage sites where it plays a role in the repair of DNA. As to quaternary structure, (Microbial infection) Interacts with HIV-1 TAT. Phosphorylated on Ser-86 and Ser-90; enhanced during G2/M phase. The phosphorylated form has a higher activity. Phosphorylation at Ser-90 by CDK1 or CDK9 is a prerequisite for phosphorylation at Ser-86 by GSK3. Phosphorylation at Ser-86 by GSK3 (GSK3A or GSK3B) activates acetyltransferase and acyltransferase activities. Phosphorylation at Ser-90 by CDK9 promotes KAT5 recruitment to chromatin. Phosphorylation by VRK1 following DNA damage promotes KAT5 association with chromatin and histone acetyltransferase activity. Post-translationally, autoacetylated. Autoacetylation is required for histone acetyltransferase activity. Autoacetylation at Lys-327 is facilitated by interaction with EP300/p300: it prevents ubiquitination and subsequent degradation by the proteasome and promotes acetylation of target proteins. Deacetylated by HDAC3 and SIRT1. Deacetylation by HDAC3 promotes its ubiquitination and cytoplasmic localization. In terms of processing, sumoylated by UBE2I at Lys-430 and Lys-451, leading to increase of its histone acetyltransferase activity in UV-induced DNA damage response, as well as its translocation to nuclear bodies. Sumoylation with SUMO2 by PIAS4 at Lys-430 promotes repair of DNA double-strand breaks (DSBs) via homologous recombination (HR). Sumoylation by PIAS4 impairs interaction with PRKDC, inhibiting non-homologous end joining (NHEJ)-mediated repair of DSBs, thereby facilitating HR. Desumoylated by SENP3. Ubiquitinated by MDM2, leading to its proteasome-dependent degradation. Ubiquitination is prevented by autoacetylation at Lys-327. Ubiquitinated following deacetylation by HDAC3, leading to cytoplasmic localization. Deubiquitinated by USP7 following interaction with ATF3, promoting its stabilization. Post-translationally, (Microbial infection) In case of HIV-1 infection, interaction with the viral Tat protein leads to KAT5 polyubiquitination and targets it to degradation.

Its subcellular location is the nucleus. The protein resides in the chromosome. It is found in the cytoplasm. It localises to the centromere. The protein localises to the kinetochore. Its subcellular location is the cytoskeleton. The protein resides in the spindle pole. It is found in the nucleolus. It localises to the perinuclear region. It catalyses the reaction L-lysyl-[histone] + acetyl-CoA = N(6)-acetyl-L-lysyl-[histone] + CoA + H(+). The catalysed reaction is L-lysyl-[protein] + acetyl-CoA = N(6)-acetyl-L-lysyl-[protein] + CoA + H(+). The enzyme catalyses (2E)-butenoyl-CoA + L-lysyl-[protein] = N(6)-(2E)-butenoyl-L-lysyl-[protein] + CoA + H(+). It carries out the reaction 2-hydroxyisobutanoyl-CoA + L-lysyl-[protein] = N(6)-(2-hydroxyisobutanoyl)-L-lysyl-[protein] + CoA + H(+). It catalyses the reaction (S)-lactoyl-CoA + L-lysyl-[protein] = N(6)-[(S)-lactoyl]-L-lysyl-[protein] + CoA + H(+). With respect to regulation, acyltransferase and acetyltransferase activities are activated by phosphorylation and autoacetylation. Autoacetylation activates the histone acetyltransferase activity. Functionally, catalytic subunit of the NuA4 histone acetyltransferase complex, a multiprotein complex involved in transcriptional activation of select genes principally by acetylation of nucleosomal histones H2A and H4. Histone acetylation alters nucleosome-DNA interactions and promotes interaction of the modified histones with other proteins which positively regulate transcription. The NuA4 histone acetyltransferase complex is required for the activation of transcriptional programs associated with proto-oncogene mediated growth induction, tumor suppressor mediated growth arrest and replicative senescence, apoptosis, and DNA repair. The NuA4 complex plays a direct role in repair of DNA double-strand breaks (DSBs) by promoting homologous recombination (HR): the complex inhibits TP53BP1 binding to chromatin via MBTD1, which recognizes and binds histone H4 trimethylated at 'Lys-20' (H4K20me), and KAT5 that catalyzes acetylation of 'Lys-15' of histone H2A (H2AK15ac), thereby blocking the ubiquitination mark required for TP53BP1 localization at DNA breaks. Also involved in DSB repair by mediating acetylation of 'Lys-5' of histone H2AX (H2AXK5ac), promoting NBN/NBS1 assembly at the sites of DNA damage. The NuA4 complex plays a key role in hematopoietic stem cell maintenance and is required to maintain acetylated H2A.Z/H2AZ1 at MYC target genes. The NuA4 complex is also required for spermatid development by promoting acetylation of histones: histone hyperacetylation is required for histone replacement during the transition from round to elongating spermatids. Component of a SWR1-like complex that specifically mediates the removal of histone H2A.Z/H2AZ1 from the nucleosome. Also acetylates non-histone proteins, such as BMAL1, ATM, AURKB, CHKA, CGAS, ERCC4/XPF, LPIN1, TP53/p53, NDC80/HEC1, NR1D2, RAN, SOX4, FOXP3, SQSTM1, ULK1 and RUBCNL/Pacer. Directly acetylates and activates ATM. Promotes nucleotide excision repair (NER) by mediating acetylation of ERCC4/XPF, thereby promoting formation of the ERCC4-ERCC1 complex. Relieves NR1D2-mediated inhibition of APOC3 expression by acetylating NR1D2. Acts as a regulator of regulatory T-cells (Treg) by catalyzing FOXP3 acetylation, thereby promoting FOXP3 transcriptional repressor activity. Involved in skeletal myoblast differentiation by mediating acetylation of SOX4. Catalyzes acetylation of APBB1/FE65, increasing its transcription activator activity. Promotes transcription elongation during the activation phase of the circadian cycle by catalyzing acetylation of BMAL1, promoting elongation of circadian transcripts. Together with GSK3 (GSK3A or GSK3B), acts as a regulator of autophagy: phosphorylated at Ser-86 by GSK3 under starvation conditions, leading to activate acetyltransferase activity and promote acetylation of key autophagy regulators, such as ULK1 and RUBCNL/Pacer. Acts as a regulator of the cGAS-STING innate antiviral response by catalyzing acetylation the N-terminus of CGAS, thereby promoting CGAS DNA-binding and activation. Also regulates lipid metabolism by mediating acetylation of CHKA or LPIN1. Promotes lipolysis of lipid droplets following glucose deprivation by mediating acetylation of isoform 1 of CHKA, thereby promoting monomerization of CHKA and its conversion into a tyrosine-protein kinase. Acts as a regulator of fatty-acid-induced triacylglycerol synthesis by catalyzing acetylation of LPIN1, thereby promoting the synthesis of diacylglycerol. In addition to protein acetyltransferase, can use different acyl-CoA substrates, such as (2E)-butenoyl-CoA (crotonyl-CoA), S-lactoyl-CoA (lactyl-CoA) and 2-hydroxyisobutanoyl-CoA (2-hydroxyisobutyryl-CoA), and is able to mediate protein crotonylation, lactylation and 2-hydroxyisobutyrylation, respectively. Acts as a key regulator of chromosome segregation and kinetochore-microtubule attachment during mitosis by mediating acetylation or crotonylation of target proteins. Catalyzes acetylation of AURKB at kinetochores, increasing AURKB activity and promoting accurate chromosome segregation in mitosis. Acetylates RAN during mitosis, promoting microtubule assembly at mitotic chromosomes. Acetylates NDC80/HEC1 during mitosis, promoting robust kinetochore-microtubule attachment. Catalyzes crotonylation of MAPRE1/EB1, thereby ensuring accurate spindle positioning in mitosis. Catalyzes lactylation of NBN/NBS1 in response to DNA damage, thereby promoting DNA double-strand breaks (DSBs) via homologous recombination (HR). In terms of biological role, (Microbial infection) Catalyzes the acetylation of flavivirus NS3 protein to modulate their RNA-binding and -unwinding activities leading to facilitate viral replication. This Homo sapiens (Human) protein is Histone acetyltransferase KAT5.